Consider the following 853-residue polypeptide: Rod cGMP-specific 3',5'-cyclic phosphodiesterase subunit beta (853 aa).

N-acetylserine is present on Ser-2. 2 consecutive GAF domains span residues 71-220 (NMER…TLNL) and 252-429 (DIER…GWSV). A PDEase domain is found at 481–814 (EEDELGKILK…KEWKALADEY (334 aa)). His-557 serves as the catalytic Proton donor. A divalent metal cation contacts are provided by His-561, His-597, Asp-598, and Asp-718. Position 850 is a cysteine methyl ester (Cys-850). Cys-850 carries S-geranylgeranyl cysteine lipidation. Residues 851–853 (RIL) constitute a propeptide, removed in mature form.

It belongs to the cyclic nucleotide phosphodiesterase family. As to quaternary structure, oligomer composed of two catalytic chains (alpha and beta), an inhibitory chain (gamma) and the delta chain. Requires a divalent metal cation as cofactor.

It is found in the membrane. The protein localises to the cell projection. Its subcellular location is the cilium. The protein resides in the photoreceptor outer segment. The catalysed reaction is 3',5'-cyclic GMP + H2O = GMP + H(+). Functionally, necessary for the formation of a functional phosphodiesterase holoenzyme. Involved in retinal circadian rhythm photoentrainment via modulation of UVA and orange light-induced phase-shift of the retina clock. May participate in processes of transmission and amplification of the visual signal. Its function is as follows. Rod-specific cGMP phosphodiesterase that catalyzes the hydrolysis of 3',5'-cyclic GMP. Necessary for the formation of a functional phosphodiesterase holoenzyme. Involved in retinal circadian rhythm photoentrainment via modulation of UVA and orange light-induced phase-shift of the retina clock. May participate in processes of transmission and amplification of the visual signal. The protein is Rod cGMP-specific 3',5'-cyclic phosphodiesterase subunit beta (PDE6B) of Bos taurus (Bovine).